The chain runs to 258 residues: MKEVDNLDSIKEEWVCETGPPDNQPLNDNPQKDCEYFVDSLFEEAEKAGAKCLSPTEQKKQVDVNIKLWKNGFTVNDDFRSYSDGASQQFLNSIKKGELPSELQGVFDKDEVDVKVEDKKNEVCMSTKPVFQPFSGQGHRLGSATPRIVSKAKSIEVDNKSTLSAVSLNNLEPITRIQIWLANGERTVQRFNISHRVSHIKDFIEKYQGTQRSPPFALATALPFLRFLDETLTLEEADLQNAVIIQRLQKTAEPFRKL.

Residues 1 to 152 form a required for interaction with CHRNA3 region; it reads MKEVDNLDSI…SATPRIVSKA (152 aa). The interval 1-165 is required for inhibition of CHRNA3 ubiquitination and translocation of CHRNA3 to the plasma membrane resulting in an increase in acetylcholine-gated nicotinic acetylcholine receptor currents; it reads MKEVDNLDSI…EVDNKSTLSA (165 aa). Positions 61–125 constitute an SEP domain; sequence QVDVNIKLWK…VEDKKNEVCM (65 aa). The segment at 168-258 is required for interaction with VCP; the sequence is LNNLEPITRI…QKTAEPFRKL (91 aa). A UBX domain is found at 170 to 247; that stretch reads NLEPITRIQI…DLQNAVIIQR (78 aa).

In terms of assembly, part of a complex composed of STUB1/CHIP, VCP/p97, CHRNA3, and UBXN2A that modulates the ubiquitination and endoplasmic reticulum-associated degradation (ERAD) of CHRNA3. Within the complex UBXN2A acts as a scaffold protein required for the interaction of CHRNA3 with VCP/p97, this interaction also inhibits CHRNA3 ubiquitination by STUB1/CHIP and subsequently ERAD. Interacts (via SEP domain) with CHRNA3 and interacts (via UBX domain) with VCP/P97; these interactions are required for the interaction of CHRNA3 with the STUB1-VCP-UBXN2A complex. Interacts with HSPA9/MOT-2 (via SBD domain); the interaction inhibits HSPA9/MOT-2 interaction with and degradation of p53, thereby promotes p53 translocation to the nucleus. Interacts with RICTOR. Ubiquitinated.

It is found in the golgi apparatus. Its subcellular location is the endoplasmic reticulum. It localises to the perikaryon. The protein localises to the cell projection. The protein resides in the dendrite. It is found in the nucleus. Its subcellular location is the cytoplasm. Acts to repress the ubiquitination and subsequent endoplasmic reticulum-associated degradation of CHRNA3 by the STUB1-VCP-UBXN2A complex in cortical neurons. Also acts to promote the translocation of CHRNA3 to the plasma membrane and subsequently increases plasma membrane acetylcholine-gated ion-channel activation. Plays a role in the inhibition of STUB1-mediated TP53 degradation, via its interaction with HSPA9 which acts to inhibit TP53 binding to HSPA9. Positively mediates the ubiquitination and proteosomal degradation of RICTOR, may thereby act as a negative regulator of the mTORC2 pathway. This chain is UBX domain-containing protein 2A, found in Rattus norvegicus (Rat).